The following is an 820-amino-acid chain: Protein bicaudal D homolog 2 (820 aa).

Residue S2 is modified to N-acetylserine. Residues E20 to S270 adopt a coiled-coil conformation. The interaction with DYNLL1, DYNC1H1, DYNC1I2, DCTN1 and DCTN2 stretch occupies residues E25–R400. Residues S190, S224, and S320 each carry the phosphoserine modification. The interval S313–P332 is disordered. Position 321 is a phosphothreonine (T321). The segment at S336–D595 is interaction with KIF5A. Residues S340–L539 are a coiled coil. Residues S345 and S397 each carry the phosphoserine modification. 4 disordered regions span residues R400 to Y427, Q563 to L582, V591 to R618, and H799 to L820. The segment covering A404 to G424 has biased composition (basic and acidic residues). A phosphoserine mark is found at S570 and S578. The interaction with RANBP2 stretch occupies residues L586–L820. T598 carries the phosphothreonine modification. The span at S602–S614 shows a compositional bias: low complexity. A coiled-coil region spans residues D662–R804. The interaction with RAB6A stretch occupies residues D662 to A810. At S819 the chain carries Phosphoserine.

Belongs to the BicD family. As to quaternary structure, part of a tripartite complex with dynein and dynactin, acts an adapter linking the dynein motor complex and dynactin. Interacts with CPNE4 (via VWFA domain). Interacts with NEK9. Interacts with DCTN2. Interacts with RAB6A. Interacts with DNAI1. Interacts with DYNLL1, DYNC1H1, DYNC1I2 and DCTN1. Forms a complex with dynein and dynactin. The dynein-dynactin-BICD2 ternary complex (DDB) binds preferentially to tyrosinated microtubules than to detyrosinated microtubules. Interacts with RANBP2, RAB6A and KIF5A. Interacts with KIF1C. Phosphorylated by NEK9 in vitro. As to expression, ubiquitously expressed with high expression in the spinal cord.

The protein localises to the golgi apparatus. It is found in the cytoplasm. The protein resides in the cytoskeleton. Its subcellular location is the nucleus. It localises to the nuclear pore complex. The protein localises to the nucleus envelope. Acts as an adapter protein linking the dynein motor complex to various cargos and converts dynein from a non-processive to a highly processive motor in the presence of dynactin. Facilitates and stabilizes the interaction between dynein and dynactin and activates dynein processivity (the ability to move along a microtubule for a long distance without falling off the track). Facilitates the binding of RAB6A to the Golgi by stabilizing its GTP-bound form. Regulates coat complex coatomer protein I (COPI)-independent Golgi-endoplasmic reticulum transport via its interaction with RAB6A and recruitment of the dynein-dynactin motor complex. Contributes to nuclear and centrosomal positioning prior to mitotic entry through regulation of both dynein and kinesin-1. During G2 phase of the cell cycle, associates with RANBP2 at the nuclear pores and recruits dynein and dynactin to the nuclear envelope to ensure proper positioning of the nucleus relative to centrosomes prior to the onset of mitosis. The protein is Protein bicaudal D homolog 2 (Bicd2) of Mus musculus (Mouse).